Reading from the N-terminus, the 371-residue chain is Cytochrome b (371 aa).

4 helical membrane-spanning segments follow: residues V32–W52, F76–F98, V113–V133, and L179–F199. The heme b site is built by H82 and H96. H183 and H197 together coordinate heme b. H202 contributes to the a ubiquinone binding site. 4 helical membrane passes run F227–F247, L296–V316, L329–Y349, and P350–L370.

Belongs to the cytochrome b family. In terms of assembly, the main subunits of complex b-c1 are: cytochrome b, cytochrome c1 and the Rieske protein. Heme b serves as cofactor.

The protein localises to the mitochondrion inner membrane. Component of the ubiquinol-cytochrome c reductase complex (complex III or cytochrome b-c1 complex) that is part of the mitochondrial respiratory chain. The b-c1 complex mediates electron transfer from ubiquinol to cytochrome c. Contributes to the generation of a proton gradient across the mitochondrial membrane that is then used for ATP synthesis. This is Cytochrome b (MT-CYB) from Leishmania tarentolae (Sauroleishmania tarentolae).